The chain runs to 437 residues: Lipopolysaccharide biosynthesis protein RfbH (437 aa).

The protein belongs to the DegT/DnrJ/EryC1 family. Requires pyridoxal 5'-phosphate as cofactor.

The protein operates within bacterial outer membrane biogenesis; LPS O-antigen biosynthesis. In Salmonella typhimurium (strain LT2 / SGSC1412 / ATCC 700720), this protein is Lipopolysaccharide biosynthesis protein RfbH (rfbH).